Reading from the N-terminus, the 182-residue chain is Large ribosomal subunit protein uL13 (182 aa).

Belongs to the universal ribosomal protein uL13 family. In terms of assembly, part of the 50S ribosomal subunit.

Functionally, this protein is one of the early assembly proteins of the 50S ribosomal subunit, although it is not seen to bind rRNA by itself. It is important during the early stages of 50S assembly. The protein is Large ribosomal subunit protein uL13 of Pyrobaculum neutrophilum (strain DSM 2338 / JCM 9278 / NBRC 100436 / V24Sta) (Thermoproteus neutrophilus).